Reading from the N-terminus, the 53-residue chain is UPF0391 membrane protein ESA_03375 (53 aa).

2 helical membrane passes run 4 to 24 (WGII…GGLA) and 28 to 48 (AGAA…SLFM).

This sequence belongs to the UPF0391 family.

It localises to the cell membrane. This chain is UPF0391 membrane protein ESA_03375, found in Cronobacter sakazakii (strain ATCC BAA-894) (Enterobacter sakazakii).